The sequence spans 383 residues: UDP-N-acetylenolpyruvoylglucosamine reductase (383 aa).

The FAD-binding PCMH-type domain occupies 42–212; sequence LSCQAMQLIT…TRVGFKLHKD (171 aa). Arginine 189 is an active-site residue. Residue serine 267 is the Proton donor of the active site. Residue glutamate 369 is part of the active site.

The protein belongs to the MurB family. The cofactor is FAD.

It localises to the cytoplasm. It carries out the reaction UDP-N-acetyl-alpha-D-muramate + NADP(+) = UDP-N-acetyl-3-O-(1-carboxyvinyl)-alpha-D-glucosamine + NADPH + H(+). It participates in cell wall biogenesis; peptidoglycan biosynthesis. Cell wall formation. This is UDP-N-acetylenolpyruvoylglucosamine reductase from Psychrobacter sp. (strain PRwf-1).